The sequence spans 316 residues: Pantothenate kinase (316 aa).

Residue 95-102 participates in ATP binding; the sequence is GSVAVGKS.

Belongs to the prokaryotic pantothenate kinase family.

The protein localises to the cytoplasm. It carries out the reaction (R)-pantothenate + ATP = (R)-4'-phosphopantothenate + ADP + H(+). Its pathway is cofactor biosynthesis; coenzyme A biosynthesis; CoA from (R)-pantothenate: step 1/5. The polypeptide is Pantothenate kinase (Shewanella sp. (strain ANA-3)).